Consider the following 105-residue polypeptide: Small ribosomal subunit protein uS10 (105 aa).

Belongs to the universal ribosomal protein uS10 family. In terms of assembly, part of the 30S ribosomal subunit.

Functionally, involved in the binding of tRNA to the ribosomes. This chain is Small ribosomal subunit protein uS10, found in Synechococcus sp. (strain JA-2-3B'a(2-13)) (Cyanobacteria bacterium Yellowstone B-Prime).